The chain runs to 237 residues: Ribosomal RNA small subunit methyltransferase G (237 aa).

S-adenosyl-L-methionine contacts are provided by residues G78, F83, 129-130 (AE), and R146.

The protein belongs to the methyltransferase superfamily. RNA methyltransferase RsmG family.

It localises to the cytoplasm. Specifically methylates the N7 position of a guanine in 16S rRNA. This is Ribosomal RNA small subunit methyltransferase G from Mesoplasma florum (strain ATCC 33453 / NBRC 100688 / NCTC 11704 / L1) (Acholeplasma florum).